Consider the following 340-residue polypeptide: MKILGIDTSCDDTSAAIVEDGKNVLSSVLSSSIDAHKEFQGVVPEIAARKHLEAILYVIDKALKDANTTLDDIDLFAVTNRPGLLGSLLVGVASAKSLAFSLNKPLLALDHIAAHIYSPHLTNDIEFPYIALVVSGGHTIITEVHDYGEYKVVGTTLDDAVGEAYDKVSKFLNLGYPGGPIIDRLAKEGNKEAIKYPIVLLNGIDEFNFSYSGLKTACVYSTKKYLKEGYEATNENIAAAFQISAIEPLYIKTLKYAEKSGIKRVTLSGGVACNSYLRDRFGNSKDFECYLPALKYTTDNAAMVAGLAYHMKDKQNFADYNLDCFSRVLNKKYNKNKSAK.

Residues histidine 111 and histidine 115 each contribute to the Fe cation site. Residues 133-137 (VVSGG), aspartate 166, glycine 179, aspartate 183, and asparagine 274 contribute to the substrate site. Aspartate 299 provides a ligand contact to Fe cation.

Belongs to the KAE1 / TsaD family. Fe(2+) serves as cofactor.

It is found in the cytoplasm. The catalysed reaction is L-threonylcarbamoyladenylate + adenosine(37) in tRNA = N(6)-L-threonylcarbamoyladenosine(37) in tRNA + AMP + H(+). Its function is as follows. Required for the formation of a threonylcarbamoyl group on adenosine at position 37 (t(6)A37) in tRNAs that read codons beginning with adenine. Is involved in the transfer of the threonylcarbamoyl moiety of threonylcarbamoyl-AMP (TC-AMP) to the N6 group of A37, together with TsaE and TsaB. TsaD likely plays a direct catalytic role in this reaction. The protein is tRNA N6-adenosine threonylcarbamoyltransferase of Brachyspira hyodysenteriae (strain ATCC 49526 / WA1).